Here is a 492-residue protein sequence, read N- to C-terminus: Nitrogenase molybdenum-iron protein alpha chain (492 aa).

Residues Cys62, Cys88, and Cys154 each coordinate [8Fe-7S] cluster. The [7Fe-Mo-9S-C-homocitryl] cluster site is built by Cys275 and His442.

Belongs to the NifD/NifK/NifE/NifN family. As to quaternary structure, tetramer of two alpha and two beta chains. Forms complex with the iron protein (nitrogenase component 2). [8Fe-7S] cluster is required as a cofactor. Requires [7Fe-Mo-9S-C-homocitryl] cluster as cofactor.

The catalysed reaction is N2 + 8 reduced [2Fe-2S]-[ferredoxin] + 16 ATP + 16 H2O = H2 + 8 oxidized [2Fe-2S]-[ferredoxin] + 2 NH4(+) + 16 ADP + 16 phosphate + 6 H(+). With respect to regulation, nitrogenase holoenzyme is subject to 'conformational protection' by FeSII; under oxidizing conditions FeSII binds to the holoenzyme and reversibly protects it from oxidation. Its function is as follows. This molybdenum-iron protein is part of the nitrogenase complex that catalyzes the key enzymatic reactions in nitrogen fixation. The sequence is that of Nitrogenase molybdenum-iron protein alpha chain (nifD) from Azotobacter vinelandii.